Consider the following 355-residue polypeptide: 3-isopropylmalate dehydrogenase (355 aa).

77–90 contributes to the NAD(+) binding site; that stretch reads GAKWDNLPREKRPE. R97, R107, R135, and D220 together coordinate substrate. Mg(2+) is bound by residues D220, D244, and D248. 277–289 provides a ligand contact to NAD(+); that stretch reads GSAPDIAGQGIAN.

Belongs to the isocitrate and isopropylmalate dehydrogenases family. LeuB type 1 subfamily. In terms of assembly, homodimer. Mg(2+) serves as cofactor. Mn(2+) is required as a cofactor.

It localises to the cytoplasm. The catalysed reaction is (2R,3S)-3-isopropylmalate + NAD(+) = 4-methyl-2-oxopentanoate + CO2 + NADH. The protein operates within amino-acid biosynthesis; L-leucine biosynthesis; L-leucine from 3-methyl-2-oxobutanoate: step 3/4. Functionally, catalyzes the oxidation of 3-carboxy-2-hydroxy-4-methylpentanoate (3-isopropylmalate) to 3-carboxy-4-methyl-2-oxopentanoate. The product decarboxylates to 4-methyl-2 oxopentanoate. This is 3-isopropylmalate dehydrogenase from Sulfurimonas denitrificans (strain ATCC 33889 / DSM 1251) (Thiomicrospira denitrificans (strain ATCC 33889 / DSM 1251)).